The primary structure comprises 196 residues: Peptidoglycan recognition protein (196 aa).

A signal peptide spans Met1–Ala23. Cystine bridges form between Cys25/Cys147 and Cys61/Cys67. The N-acetylmuramoyl-L-alanine amidase domain maps to Arg46–Gly173.

Belongs to the N-acetylmuramoyl-L-alanine amidase 2 family. As to quaternary structure, monomer. In terms of tissue distribution, constitutively expressed in fat body, epithelial cells and hemocytes. Not detected in Malpighian tubules, silk gland or midgut.

Binds specifically to peptidoglycan and triggers the propenoloxidase cascade which is an important insect defense mechanism. The sequence is that of Peptidoglycan recognition protein from Bombyx mori (Silk moth).